Reading from the N-terminus, the 253-residue chain is Triosephosphate isomerase (253 aa).

9 to 11 (NWK) contacts substrate. Residue H94 is the Electrophile of the active site. E163 functions as the Proton acceptor in the catalytic mechanism. Residues G169, S209, and 230 to 231 (GG) contribute to the substrate site.

The protein belongs to the triosephosphate isomerase family. Homodimer.

The protein resides in the cytoplasm. It catalyses the reaction D-glyceraldehyde 3-phosphate = dihydroxyacetone phosphate. Its pathway is carbohydrate biosynthesis; gluconeogenesis. It participates in carbohydrate degradation; glycolysis; D-glyceraldehyde 3-phosphate from glycerone phosphate: step 1/1. In terms of biological role, involved in the gluconeogenesis. Catalyzes stereospecifically the conversion of dihydroxyacetone phosphate (DHAP) to D-glyceraldehyde-3-phosphate (G3P). The protein is Triosephosphate isomerase of Dehalococcoides mccartyi (strain ATCC BAA-2100 / JCM 16839 / KCTC 5957 / BAV1).